The primary structure comprises 906 residues: Probable RNA-directed DNA polymerase from transposon BS (906 aa).

Residues 482-758 form the Reverse transcriptase domain; the sequence is AILRVQFFPK…SQAKYLGITL (277 aa).

The cofactor is Mg(2+). It depends on Mn(2+) as a cofactor.

It carries out the reaction DNA(n) + a 2'-deoxyribonucleoside 5'-triphosphate = DNA(n+1) + diphosphate. The protein is Probable RNA-directed DNA polymerase from transposon BS of Drosophila melanogaster (Fruit fly).